A 135-amino-acid chain; its full sequence is Large ribosomal subunit protein uL16c (135 aa).

This sequence belongs to the universal ribosomal protein uL16 family. As to quaternary structure, part of the 50S ribosomal subunit.

Its subcellular location is the plastid. The protein localises to the chloroplast. This chain is Large ribosomal subunit protein uL16c, found in Ceratophyllum demersum (Rigid hornwort).